The sequence spans 489 residues: WD repeat-containing protein JIP5 (489 aa).

The WD 1 repeat unit spans residues 4–45 (PLSSDALDLCFHPAAETNLLAVGLISGKIQLINYDDYLSSPS). Residues 46-66 (SSRTPLAPPSKKSKPSTISSA) form a disordered region. A WD 2 repeat occupies 124 to 163 (EVHDAAPSRVLPVDESLVVTGDDDGVVRLWDVRKGGGKGI). Residues 192 to 246 (SIKEAKKSKTQLKKQRRRARQAERLKEHDKEKREQNASDTEASEPDSEDDAAIKV) form a disordered region. Residues 199–210 (SKTQLKKQRRRA) show a composition bias toward basic residues. The segment covering 211–227 (RQAERLKEHDKEKREQN) has biased composition (basic and acidic residues). Positions 232–241 (EASEPDSEDD) are enriched in acidic residues. 2 WD repeats span residues 279–318 (DQED…LDHV) and 323–363 (GHPA…GVIA). A disordered region spans residues 417-489 (IVGLAEDDSD…AGKGGFFSDL (73 aa)). Composition is skewed to acidic residues over residues 421-440 (AEDD…DDDD) and 449-472 (DGAE…DSED).

Belongs to the WD repeat WDR55 family.

The protein localises to the nucleus. The protein resides in the nucleolus. In Mycosarcoma maydis (Corn smut fungus), this protein is WD repeat-containing protein JIP5 (JIP5).